Consider the following 212-residue polypeptide: Peptide methionine sulfoxide reductase MsrA (212 aa).

Cys51 is a catalytic residue.

This sequence belongs to the MsrA Met sulfoxide reductase family.

The enzyme catalyses L-methionyl-[protein] + [thioredoxin]-disulfide + H2O = L-methionyl-(S)-S-oxide-[protein] + [thioredoxin]-dithiol. The catalysed reaction is [thioredoxin]-disulfide + L-methionine + H2O = L-methionine (S)-S-oxide + [thioredoxin]-dithiol. Its function is as follows. Has an important function as a repair enzyme for proteins that have been inactivated by oxidation. Catalyzes the reversible oxidation-reduction of methionine sulfoxide in proteins to methionine. The protein is Peptide methionine sulfoxide reductase MsrA of Vibrio cholerae serotype O1 (strain ATCC 39541 / Classical Ogawa 395 / O395).